The sequence spans 181 residues: Crossover junction endodeoxyribonuclease RuvC (181 aa).

Active-site residues include D8, E67, and D139. Residues D8, E67, and D139 each coordinate Mg(2+).

The protein belongs to the RuvC family. Homodimer which binds Holliday junction (HJ) DNA. The HJ becomes 2-fold symmetrical on binding to RuvC with unstacked arms; it has a different conformation from HJ DNA in complex with RuvA. In the full resolvosome a probable DNA-RuvA(4)-RuvB(12)-RuvC(2) complex forms which resolves the HJ. The cofactor is Mg(2+).

It is found in the cytoplasm. It catalyses the reaction Endonucleolytic cleavage at a junction such as a reciprocal single-stranded crossover between two homologous DNA duplexes (Holliday junction).. Its function is as follows. The RuvA-RuvB-RuvC complex processes Holliday junction (HJ) DNA during genetic recombination and DNA repair. Endonuclease that resolves HJ intermediates. Cleaves cruciform DNA by making single-stranded nicks across the HJ at symmetrical positions within the homologous arms, yielding a 5'-phosphate and a 3'-hydroxyl group; requires a central core of homology in the junction. The consensus cleavage sequence is 5'-(A/T)TT(C/G)-3'. Cleavage occurs on the 3'-side of the TT dinucleotide at the point of strand exchange. HJ branch migration catalyzed by RuvA-RuvB allows RuvC to scan DNA until it finds its consensus sequence, where it cleaves and resolves the cruciform DNA. This Acinetobacter baumannii (strain SDF) protein is Crossover junction endodeoxyribonuclease RuvC.